The primary structure comprises 320 residues: Glycerol-3-phosphate dehydrogenase [NAD(P)+] (320 aa).

3 residues coordinate NADPH: phenylalanine 11, arginine 30, and lysine 102. Sn-glycerol 3-phosphate-binding residues include lysine 102, glycine 130, and serine 132. Alanine 134 is a binding site for NADPH. Sn-glycerol 3-phosphate-binding residues include lysine 185, aspartate 238, serine 248, arginine 249, and asparagine 250. Lysine 185 acts as the Proton acceptor in catalysis. Position 249 (arginine 249) interacts with NADPH. An NADPH-binding site is contributed by glutamate 270.

Belongs to the NAD-dependent glycerol-3-phosphate dehydrogenase family.

The protein localises to the cytoplasm. The enzyme catalyses sn-glycerol 3-phosphate + NAD(+) = dihydroxyacetone phosphate + NADH + H(+). The catalysed reaction is sn-glycerol 3-phosphate + NADP(+) = dihydroxyacetone phosphate + NADPH + H(+). It participates in membrane lipid metabolism; glycerophospholipid metabolism. Catalyzes the reduction of the glycolytic intermediate dihydroxyacetone phosphate (DHAP) to sn-glycerol 3-phosphate (G3P), the key precursor for phospholipid synthesis. The sequence is that of Glycerol-3-phosphate dehydrogenase [NAD(P)+] from Roseobacter denitrificans (strain ATCC 33942 / OCh 114) (Erythrobacter sp. (strain OCh 114)).